Here is a 446-residue protein sequence, read N- to C-terminus: Adenylosuccinate synthetase (446 aa).

GTP is bound by residues 21–27 (GDEGKGK) and 49–51 (GHT). Asp22 (proton acceptor) is an active-site residue. The Mg(2+) site is built by Asp22 and Gly49. IMP-binding positions include 22-25 (DEGK), 47-50 (NAGH), Thr141, Arg155, Gln236, Thr251, and Arg319. His50 serves as the catalytic Proton donor. 315–321 (VTTGRSR) provides a ligand contact to substrate. GTP contacts are provided by residues Arg321, 347–349 (KLD), and 429–431 (STS).

Belongs to the adenylosuccinate synthetase family. In terms of assembly, homodimer. It depends on Mg(2+) as a cofactor.

The protein localises to the cytoplasm. It catalyses the reaction IMP + L-aspartate + GTP = N(6)-(1,2-dicarboxyethyl)-AMP + GDP + phosphate + 2 H(+). Its pathway is purine metabolism; AMP biosynthesis via de novo pathway; AMP from IMP: step 1/2. In terms of biological role, plays an important role in the de novo pathway of purine nucleotide biosynthesis. Catalyzes the first committed step in the biosynthesis of AMP from IMP. This is Adenylosuccinate synthetase from Polaromonas naphthalenivorans (strain CJ2).